Consider the following 460-residue polypeptide: Cysteine--tRNA ligase (460 aa).

Zn(2+) is bound at residue cysteine 29. The 'HIGH' region signature appears at 31–41 (ATPQSSPHIGH). Zn(2+)-binding residues include cysteine 212, histidine 237, and glutamate 241. The short motif at 268–272 (KMSKS) is the 'KMSKS' region element. Lysine 271 is a binding site for ATP.

It belongs to the class-I aminoacyl-tRNA synthetase family. Monomer. Zn(2+) is required as a cofactor.

It localises to the cytoplasm. It carries out the reaction tRNA(Cys) + L-cysteine + ATP = L-cysteinyl-tRNA(Cys) + AMP + diphosphate. This is Cysteine--tRNA ligase from Corynebacterium glutamicum (strain ATCC 13032 / DSM 20300 / JCM 1318 / BCRC 11384 / CCUG 27702 / LMG 3730 / NBRC 12168 / NCIMB 10025 / NRRL B-2784 / 534).